Here is a 450-residue protein sequence, read N- to C-terminus: Caspase Dronc (450 aa).

Positions 1 to 134 are excised as a propeptide; it reads MQPPELEIGM…RTSRKSADIV (134 aa). The CARD domain occupies 64-109; the sequence is EKDVRVEQHRRLLLKITQRGPTAYNLLINALRNINCLDAAVLLESV. The segment at 114 to 125 is required for binding Diap1; it reads SRPPFISLNERR. Catalysis depends on residues H271 and C318. Residues 321 to 324 constitute a propeptide that is removed on maturation; the sequence is DEYD.

Belongs to the peptidase C14A family. In terms of assembly, interacts (via residues 114-125) with Diap1 (via BIR 2 domain); binding blocks Dronc-mediated cell death. Can form a stable complex with Drice. Rpr, hid and grim can out-compete Dronc for binding Diap1, therefore removing Diap1-mediated ubiquitination. Interacts (via CARD domain) with Dark (via Dark CARD and WD domains); the interaction stimulates Dark oligomerization to form the apoptosome and brings pairs of Dronc molecules together on the apoptosome to facilitate their dimerization and activation by autocatalytic cleavage. Binding to Dark stimulates apoptosome assembly. After autocatalytic cleavage the Dronc caspase domain dissociates from the apoptosome but the CARD domain remains associated. In terms of processing, ubiquitinated by Diap1, leading to its subsequent degradation. Ubiquitously expressed in embryos during early stages of development. In late third instar larvae, dramatic up-regulation in salivary glands and midgut before histolysis of these tissues.

The protein localises to the cytoplasm. The enzyme catalyses Strict requirement for an Asp residue at position P1 and with a marked preference for His at position P2. It has a preferred cleavage sequence of Leu-Gly-His-Asp-|-Xaa.. Its activity is regulated as follows. Zymogen activated by autocatalytic cleavage; association with the Dark apoptosome brings multiple molecules together to facilitate their dimerization and activation by autocatalytic cleavage. Functionally, involved in the activation cascade of caspases responsible for apoptosis execution. Effector of steroid-mediated apoptosis during insect metamorphosis. Overexpression promotes programmed cell death. Interaction with Diap1 is required to suppress Dronc-mediated cell death; via Diap1-mediated ubiquitination of Dronc. Rate-limiting caspase in rpr, grim and hid death pathway. Recruited to the Dark apoptosome, an adapter protein complex that mediates activation of the caspase cascade in programmed cell death initiated by the intrinsic apoptosis pathway. Association with the Dark apoptosome stimulates autocatalytic cleavage and activation of Dronc, promoting Dronc-mediated cleavage of downstream effector caspases such as Drice. This is Caspase Dronc from Drosophila melanogaster (Fruit fly).